Consider the following 318-residue polypeptide: 2-keto-3-deoxygluconate permease (318 aa).

10 helical membrane-spanning segments follow: residues Ile-10–Pro-30, Gly-42–Ile-62, Val-76–Leu-96, Leu-105–Leu-125, Ala-139–Gly-159, Gly-162–Phe-182, Val-199–Ile-219, Phe-224–Ala-244, Ala-263–Val-283, and Ala-289–Trp-309.

It belongs to the KdgT transporter family.

Its subcellular location is the cell inner membrane. The enzyme catalyses 2-dehydro-3-deoxy-D-gluconate(in) + H(+)(in) = 2-dehydro-3-deoxy-D-gluconate(out) + H(+)(out). Its function is as follows. Catalyzes the proton-dependent uptake of 2-keto-3-deoxygluconate (KDG) into the cell. The chain is 2-keto-3-deoxygluconate permease from Pectobacterium carotovorum subsp. carotovorum (strain PC1).